A 447-amino-acid chain; its full sequence is GTPase Era, mitochondrial (447 aa).

The transit peptide at 1-18 directs the protein to the mitochondrion; it reads MTLRSCETFLRRSLRFST. The Era-type G domain maps to 109 to 340; the sequence is KSLKVAIVGS…RYLFVAAKPC (232 aa). A G1 region spans residues 117 to 124; sequence GSPNAGKS. 117 to 124 serves as a coordination point for GTP; that stretch reads GSPNAGKS. A G2 region spans residues 143-147; that stretch reads HTTRS. The interval 164-167 is G3; sequence DTPG. GTP is bound by residues 164–168 and 233–236; these read DTPGL and NKVD. Positions 233–236 are G4; it reads NKVD. Residues 318–320 are G5; sequence LSS. A KH type-2 domain is found at 370-447; that stretch reads LPKEVPYTMT…RLKISVKLRK (78 aa).

This sequence belongs to the TRAFAC class TrmE-Era-EngA-EngB-Septin-like GTPase superfamily. Era GTPase family.

The protein resides in the mitochondrion matrix. The protein localises to the mitochondrion inner membrane. In terms of biological role, probable GTPase that plays a role in the mitochondrial ribosomal small subunit assembly. Specifically binds the 12S mitochondrial rRNA (12S mt-rRNA) to a 33 nucleotide section delineating the 3' terminal stem-loop region. May act as a chaperone that protects the 12S mt-rRNA on the 28S mitoribosomal subunit during ribosomal small subunit assembly. The sequence is that of GTPase Era, mitochondrial (eral1) from Danio rerio (Zebrafish).